Reading from the N-terminus, the 224-residue chain is LexA repressor (224 aa).

The segment at residues 31–51 (RAEIANTLGFKSANAAEEHLQ) is a DNA-binding region (H-T-H motif). Residues Ser142 and Lys179 each act as for autocatalytic cleavage activity in the active site.

Belongs to the peptidase S24 family. In terms of assembly, homodimer.

It carries out the reaction Hydrolysis of Ala-|-Gly bond in repressor LexA.. Functionally, represses a number of genes involved in the response to DNA damage (SOS response), including recA and lexA. In the presence of single-stranded DNA, RecA interacts with LexA causing an autocatalytic cleavage which disrupts the DNA-binding part of LexA, leading to derepression of the SOS regulon and eventually DNA repair. This chain is LexA repressor, found in Delftia acidovorans (strain DSM 14801 / SPH-1).